We begin with the raw amino-acid sequence, 520 residues long: Cell division control protein 3 (520 aa).

Residues 1-24 (MSLKEEQVSIKQDPEQEERQHDQF) show a composition bias toward basic and acidic residues. Residues 1–83 (MSLKEEQVSI…SSQSEKGQVL (83 aa)) are disordered. N-acetylserine is present on S2. The residue at position 2 (S2) is a Phosphoserine. Residue K4 forms a Glycyl lysine isopeptide (Lys-Gly) (interchain with G-Cter in SUMO) linkage. S9 carries the post-translational modification Phosphoserine. Glycyl lysine isopeptide (Lys-Gly) (interchain with G-Cter in SUMO) cross-links involve residues K11 and K30. T47 carries the phosphothreonine modification. Residues 51–64 (DSERFEAAESDVKV) show a composition bias toward basic and acidic residues. S60 carries the post-translational modification Phosphoserine. Residue K63 forms a Glycyl lysine isopeptide (Lys-Gly) (interchain with G-Cter in SUMO) linkage. Residue S77 is modified to Phosphoserine. Positions 116 to 411 (NGFSFNLLCV…ENYRSSKLAK (296 aa)) constitute a Septin-type G domain. The interval 126–133 (GPDGIGKT) is G1 motif. 126-133 (GPDGIGKT) lines the GTP pocket. A compositionally biased stretch (acidic residues) spans 156-167 (ELANDQEEEEGQ). Residues 156–181 (ELANDQEEEEGQGEGHENQSQEQRHK) form a disordered region. Basic and acidic residues predominate over residues 168–179 (GEGHENQSQEQR). Position 175 is a phosphoserine (S175). Residues 204–207 (DTEG) are G3 motif. Residues G207, 287–295 (KSDILTDEE), G344, and R360 each bind GTP. Positions 286-289 (AKSD) are G4 motif. Residue K287 forms a Glycyl lysine isopeptide (Lys-Gly) (interchain with G-Cter in SUMO) linkage. Residues 427–508 (ISKQQEEKTL…INSASPNVNH (82 aa)) adopt a coiled-coil conformation. T468 carries the post-translational modification Phosphothreonine. The disordered stretch occupies residues 496-520 (ELSINSASPNVNHSPVPTKKKGFLR). Residues 497–510 (LSINSASPNVNHSP) are compositionally biased toward polar residues. S509 carries the phosphoserine modification.

This sequence belongs to the TRAFAC class TrmE-Era-EngA-EngB-Septin-like GTPase superfamily. Septin GTPase family. In terms of assembly, component of the septin complex which consists of CDC3, CDC10, CDC11, CDC12 and probably SHS1 and rearranges to a cortical collar of highly ordered filaments at the mother-bud-neck. A complex formed by CDC3, CDC10, CDC11 and CDC12 is capable of forming long filaments in vitro and the components seem to be present in a 2:2:2:2 arrangement in vivo. The filaments are proposed to be formed by the end-to-end polymerization of CDC3-CDC12-CDC11 complexes with CDC10 serving as a bridge to bundle the polymers into paired filaments. Component of the GIN4 complex composed of at least BNI5, CDC3, CDC10, CDC11, CDC12, GIN4, NAP1 and SHS1. Self-associates. Interacts with SIZ1 and SYP1. Post-translationally, phosphorylated by CDC28. Phosphorylation at the end of G1 may facilitate initiation of a new cell cycle by promoting disassembly of the obsolete septin ring from the previous cell cycle. In terms of processing, sumoylated during mitosis on the mother cell side of the bud neck by UBC9/SIZ1. Sumoylation probably plays a central role in regulating septin ring disassembly during the cell cycle.

Its subcellular location is the membrane. The protein resides in the bud neck. Its function is as follows. Septins are GTPases involved in cytokinesis that assemble early in the cell cycle as a patch at the incipient bud site and form a ring approximate 15 minutes before bud emergence, which transforms into an hour-glass shaped collar of cortical filaments that spans both sides of the mother-bud neck. This collar persists until just before cytokinesis, when it splits into two rings that occupy opposite sides of the neck. The septins at the bud neck serve as a structural scaffold that recruits different components involved in diverse processes at specific stages during the cell cycle. Many proteins bind asymmetrically to the septin collar. The septin assembly is regulated by protein kinases GIN4 and/or CLA4. May act by recruiting MYO1 and HOF1, a protein involved in septation, to the site of cleavage. Septins are also involved in cell morphogenesis, bud site selection, chitin deposition, cell cycle regulation, cell compartmentalization and spore wall formation. In Saccharomyces cerevisiae (strain ATCC 204508 / S288c) (Baker's yeast), this protein is Cell division control protein 3 (CDC3).